Here is a 945-residue protein sequence, read N- to C-terminus: Valine--tRNA ligase (945 aa).

The 'HIGH' region motif lies at Pro-42–His-52. The short motif at Lys-552–Ser-556 is the 'KMSKS' region element. Lys-555 is a binding site for ATP. Positions Asp-879 to Asp-945 form a coiled coil.

The protein belongs to the class-I aminoacyl-tRNA synthetase family. ValS type 1 subfamily. Monomer.

It localises to the cytoplasm. It catalyses the reaction tRNA(Val) + L-valine + ATP = L-valyl-tRNA(Val) + AMP + diphosphate. Catalyzes the attachment of valine to tRNA(Val). As ValRS can inadvertently accommodate and process structurally similar amino acids such as threonine, to avoid such errors, it has a 'posttransfer' editing activity that hydrolyzes mischarged Thr-tRNA(Val) in a tRNA-dependent manner. This chain is Valine--tRNA ligase, found in Neisseria meningitidis serogroup B (strain ATCC BAA-335 / MC58).